Consider the following 605-residue polypeptide: Pescadillo homolog (605 aa).

The region spanning 346-440 is the BRCT domain; the sequence is PVATLFSEFV…ELVPANLYLP (95 aa). Positions 449-553 are disordered; the sequence is SPWGDSTGYD…RKATEEEEEK (105 aa). A compositionally biased stretch (acidic residues) spans 461 to 508; that stretch reads AENDEDVEGSDAEEIDESADEDAESEEVEEDDTAAVALNEDDEDDEDE. Over residues 526 to 537 the composition is skewed to basic and acidic residues; it reads EAKDVIDSESSD. Residues 533 to 605 adopt a coiled-coil conformation; it reads SESSDKKKKK…KAKLAKLDKK (73 aa).

It belongs to the pescadillo family. In terms of assembly, component of the NOP7 complex, composed of ERB1, NOP7 and YTM1. The complex is held together by ERB1, which interacts with NOP7 via its N-terminal domain and with YTM1 via a high-affinity interaction between the seven-bladed beta-propeller domains of the 2 proteins. The NOP7 complex associates with the 66S pre-ribosome.

The protein localises to the nucleus. It localises to the nucleolus. It is found in the nucleoplasm. Its function is as follows. Component of the NOP7 complex, which is required for maturation of the 25S and 5.8S ribosomal RNAs and formation of the 60S ribosome. In Kluyveromyces lactis (strain ATCC 8585 / CBS 2359 / DSM 70799 / NBRC 1267 / NRRL Y-1140 / WM37) (Yeast), this protein is Pescadillo homolog.